Reading from the N-terminus, the 559-residue chain is Leucine-rich repeat-containing protein 71 (559 aa).

Over residues 1–18 (MSSEQSAPGASPRAPRPG) the composition is skewed to low complexity. The disordered stretch occupies residues 1 to 56 (MSSEQSAPGASPRAPRPGTQKSSGAVTKKGERAAKEKPATVLPPVGEEEPKSPEEY). The segment covering 28–38 (KKGERAAKEKP) has biased composition (basic and acidic residues). 5 LRR repeats span residues 172–193 (NLWKVGLTDKTLTTFIELLPLC), 196–216 (TLRKVSLEGNPLPEQSYHKLM), 221–241 (TIAHLSLRNNNIDDRGAQLLG), 253–266 (TLVSLNLGFNHIGD), and 281–302 (SLLWLSLAHNRIQDKGALKLAE). Composition is skewed to basic and acidic residues over residues 324-348 (KGTQERSRSPSSSRHGDSKTDREKS) and 380-391 (KSWELAKKEEKL). Positions 324–427 (KGTQERSRSP…PEQKPSRAKG (104 aa)) are disordered.

The sequence is that of Leucine-rich repeat-containing protein 71 (LRRC71) from Homo sapiens (Human).